Reading from the N-terminus, the 113-residue chain is MAAIPSSGSLVATHDYYRRRLGSTSSNSSCGSVDYSGEVIPHHPGLPKSDPGHWWASFFFGKSTHPSMTTVSESPESSGTFSISNGLIPCRLAQESLQKQKVGDPKSDSSPSA.

It belongs to the PPDPF family.

Functionally, probable regulator of exocrine pancreas development. The polypeptide is Pancreatic progenitor cell differentiation and proliferation factor (ppdpf) (Xenopus tropicalis (Western clawed frog)).